An 85-amino-acid chain; its full sequence is Large ribosomal subunit protein bL27 (85 aa).

Residues 1–21 are disordered; the sequence is MAHKKGASSSRNGRDSNAQRL. Polar residues predominate over residues 7 to 19; that stretch reads ASSSRNGRDSNAQ.

Belongs to the bacterial ribosomal protein bL27 family.

The sequence is that of Large ribosomal subunit protein bL27 from Beutenbergia cavernae (strain ATCC BAA-8 / DSM 12333 / CCUG 43141 / JCM 11478 / NBRC 16432 / NCIMB 13614 / HKI 0122).